We begin with the raw amino-acid sequence, 511 residues long: 2,3-bisphosphoglycerate-independent phosphoglycerate mutase (511 aa).

Mn(2+) contacts are provided by aspartate 14 and serine 64. Serine 64 acts as the Phosphoserine intermediate in catalysis. Residues histidine 125, 155–156 (RD), arginine 187, arginine 193, 259–262 (RADR), and lysine 333 each bind substrate. The Mn(2+) site is built by aspartate 400, histidine 404, aspartate 441, histidine 442, and histidine 460.

The protein belongs to the BPG-independent phosphoglycerate mutase family. In terms of assembly, monomer. Requires Mn(2+) as cofactor.

It catalyses the reaction (2R)-2-phosphoglycerate = (2R)-3-phosphoglycerate. The protein operates within carbohydrate degradation; glycolysis; pyruvate from D-glyceraldehyde 3-phosphate: step 3/5. Functionally, catalyzes the interconversion of 2-phosphoglycerate and 3-phosphoglycerate. The polypeptide is 2,3-bisphosphoglycerate-independent phosphoglycerate mutase (Idiomarina loihiensis (strain ATCC BAA-735 / DSM 15497 / L2-TR)).